Consider the following 95-residue polypeptide: Protein ECS1 (95 aa).

A signal peptide spans 1-27 (MASSIVSSMFLFLLLLLVFPHIDNVLG).

As to expression, expressed in leaves, flowers and stems, but not in roots.

Its subcellular location is the secreted. The protein localises to the cell wall. Functionally, maybe involved in defense responses to X.campestris, but probably not a X.campestris pv. campestris race 750 (e.g. Xcc750) resistance gene; according to genetic data, linked to a locus influencing resistance to Xcc750. This chain is Protein ECS1, found in Arabidopsis thaliana (Mouse-ear cress).